The chain runs to 120 residues: Small ribosomal subunit protein uS19 (120 aa).

It belongs to the universal ribosomal protein uS19 family.

The sequence is that of Small ribosomal subunit protein uS19 (RPS15) from Naegleria gruberi (Amoeba).